Reading from the N-terminus, the 160-residue chain is SsrA-binding protein (160 aa).

The segment at 134–160 (RKAHDKREAVKERDWNRDKARLMRDRG) is disordered. Residues 138-160 (DKREAVKERDWNRDKARLMRDRG) are compositionally biased toward basic and acidic residues.

It belongs to the SmpB family.

It localises to the cytoplasm. Required for rescue of stalled ribosomes mediated by trans-translation. Binds to transfer-messenger RNA (tmRNA), required for stable association of tmRNA with ribosomes. tmRNA and SmpB together mimic tRNA shape, replacing the anticodon stem-loop with SmpB. tmRNA is encoded by the ssrA gene; the 2 termini fold to resemble tRNA(Ala) and it encodes a 'tag peptide', a short internal open reading frame. During trans-translation Ala-aminoacylated tmRNA acts like a tRNA, entering the A-site of stalled ribosomes, displacing the stalled mRNA. The ribosome then switches to translate the ORF on the tmRNA; the nascent peptide is terminated with the 'tag peptide' encoded by the tmRNA and targeted for degradation. The ribosome is freed to recommence translation, which seems to be the essential function of trans-translation. In Azorhizobium caulinodans (strain ATCC 43989 / DSM 5975 / JCM 20966 / LMG 6465 / NBRC 14845 / NCIMB 13405 / ORS 571), this protein is SsrA-binding protein.